The sequence spans 346 residues: UDP-3-O-acylglucosamine N-acyltransferase (346 aa).

Residue His253 is the Proton acceptor of the active site.

This sequence belongs to the transferase hexapeptide repeat family. LpxD subfamily. Homotrimer.

It carries out the reaction a UDP-3-O-[(3R)-3-hydroxyacyl]-alpha-D-glucosamine + a (3R)-hydroxyacyl-[ACP] = a UDP-2-N,3-O-bis[(3R)-3-hydroxyacyl]-alpha-D-glucosamine + holo-[ACP] + H(+). Its pathway is bacterial outer membrane biogenesis; LPS lipid A biosynthesis. Its function is as follows. Catalyzes the N-acylation of UDP-3-O-acylglucosamine using 3-hydroxyacyl-ACP as the acyl donor. Is involved in the biosynthesis of lipid A, a phosphorylated glycolipid that anchors the lipopolysaccharide to the outer membrane of the cell. The polypeptide is UDP-3-O-acylglucosamine N-acyltransferase (Rickettsia felis (strain ATCC VR-1525 / URRWXCal2) (Rickettsia azadi)).